Reading from the N-terminus, the 95-residue chain is CRISPR-associated endoribonuclease Cas2 (95 aa).

Asp-9 serves as a coordination point for Mg(2+).

It belongs to the CRISPR-associated endoribonuclease Cas2 protein family. In terms of assembly, homodimer, forms a heterotetramer with a Cas1 homodimer. It depends on Mg(2+) as a cofactor.

Its function is as follows. CRISPR (clustered regularly interspaced short palindromic repeat), is an adaptive immune system that provides protection against mobile genetic elements (viruses, transposable elements and conjugative plasmids). CRISPR clusters contain sequences complementary to antecedent mobile elements and target invading nucleic acids. CRISPR clusters are transcribed and processed into CRISPR RNA (crRNA). Functions as a ssRNA-specific endoribonuclease. Involved in the integration of spacer DNA into the CRISPR cassette. The polypeptide is CRISPR-associated endoribonuclease Cas2 (Methylorubrum extorquens (strain CM4 / NCIMB 13688) (Methylobacterium extorquens)).